Consider the following 289-residue polypeptide: Inorganic pyrophosphatase (289 aa).

R80 contributes to the diphosphate binding site. Residues D117, D122, and D154 each contribute to the Mg(2+) site.

It belongs to the PPase family. Homodimer. Requires Mg(2+) as cofactor.

Its subcellular location is the cytoplasm. It carries out the reaction diphosphate + H2O = 2 phosphate + H(+). The polypeptide is Inorganic pyrophosphatase (ppa1) (Schizosaccharomyces pombe (strain 972 / ATCC 24843) (Fission yeast)).